The sequence spans 160 residues: Crossover junction endodeoxyribonuclease RuvC (160 aa).

Active-site residues include Asp-9, Glu-68, and Asp-141. 3 residues coordinate Mg(2+): Asp-9, Glu-68, and Asp-141.

Belongs to the RuvC family. As to quaternary structure, homodimer which binds Holliday junction (HJ) DNA. The HJ becomes 2-fold symmetrical on binding to RuvC with unstacked arms; it has a different conformation from HJ DNA in complex with RuvA. In the full resolvosome a probable DNA-RuvA(4)-RuvB(12)-RuvC(2) complex forms which resolves the HJ. Mg(2+) serves as cofactor.

The protein resides in the cytoplasm. The catalysed reaction is Endonucleolytic cleavage at a junction such as a reciprocal single-stranded crossover between two homologous DNA duplexes (Holliday junction).. Its function is as follows. The RuvA-RuvB-RuvC complex processes Holliday junction (HJ) DNA during genetic recombination and DNA repair. Endonuclease that resolves HJ intermediates. Cleaves cruciform DNA by making single-stranded nicks across the HJ at symmetrical positions within the homologous arms, yielding a 5'-phosphate and a 3'-hydroxyl group; requires a central core of homology in the junction. The consensus cleavage sequence is 5'-(A/T)TT(C/G)-3'. Cleavage occurs on the 3'-side of the TT dinucleotide at the point of strand exchange. HJ branch migration catalyzed by RuvA-RuvB allows RuvC to scan DNA until it finds its consensus sequence, where it cleaves and resolves the cruciform DNA. This chain is Crossover junction endodeoxyribonuclease RuvC, found in Campylobacter jejuni (strain RM1221).